The sequence spans 85 residues: Beta-insect depressant toxin BjIT2 (85 aa).

Positions 1 to 21 (MKLLLLLVISASMLLECLVNA) are cleaved as a signal peptide. The region spanning 22–82 (DGYIRKKDGC…TWKSSTNTCG (61 aa)) is the LCN-type CS-alpha/beta domain. 4 cysteine pairs are disulfide-bonded: C31-C81, C35-C56, C42-C63, and C46-C65. Positions 83–85 (RKK) are cleaved as a propeptide — removed by a carboxypeptidase.

This sequence belongs to the long (4 C-C) scorpion toxin superfamily. Sodium channel inhibitor family. Beta subfamily. C-terminal basic residues are removed by a carboxypeptidase. Expressed by the venom gland.

Its subcellular location is the secreted. Its function is as follows. Depressant insect beta-toxins cause a transient contraction paralysis followed by a slow flaccid paralysis. They bind voltage-independently at site-4 of sodium channels (Nav) and shift the voltage of activation toward more negative potentials thereby affecting sodium channel activation and promoting spontaneous and repetitive firing. This toxin is active only on insects. The polypeptide is Beta-insect depressant toxin BjIT2 (Hottentotta judaicus (Black scorpion)).